We begin with the raw amino-acid sequence, 115 residues long: Holo-[acyl-carrier-protein] synthase (115 aa).

Mg(2+) is bound by residues D6 and E51.

Belongs to the P-Pant transferase superfamily. AcpS family. The cofactor is Mg(2+).

The protein localises to the cytoplasm. It catalyses the reaction apo-[ACP] + CoA = holo-[ACP] + adenosine 3',5'-bisphosphate + H(+). Functionally, transfers the 4'-phosphopantetheine moiety from coenzyme A to a Ser of acyl-carrier-protein. The sequence is that of Holo-[acyl-carrier-protein] synthase from Campylobacter jejuni subsp. jejuni serotype O:23/36 (strain 81-176).